A 388-amino-acid chain; its full sequence is Succinate--CoA ligase [ADP-forming] subunit beta (388 aa).

The ATP-grasp domain occupies 9–244 (KQLFAEFGLP…PSQEDEREAH (236 aa)). ATP-binding positions include Lys46, 53–55 (GRG), Glu99, Ser102, and Glu107. The Mg(2+) site is built by Asn199 and Asp213. Substrate contacts are provided by residues Asn264 and 321-323 (GIV).

Belongs to the succinate/malate CoA ligase beta subunit family. As to quaternary structure, heterotetramer of two alpha and two beta subunits. Mg(2+) serves as cofactor.

The enzyme catalyses succinate + ATP + CoA = succinyl-CoA + ADP + phosphate. It catalyses the reaction GTP + succinate + CoA = succinyl-CoA + GDP + phosphate. It participates in carbohydrate metabolism; tricarboxylic acid cycle; succinate from succinyl-CoA (ligase route): step 1/1. In terms of biological role, succinyl-CoA synthetase functions in the citric acid cycle (TCA), coupling the hydrolysis of succinyl-CoA to the synthesis of either ATP or GTP and thus represents the only step of substrate-level phosphorylation in the TCA. The beta subunit provides nucleotide specificity of the enzyme and binds the substrate succinate, while the binding sites for coenzyme A and phosphate are found in the alpha subunit. The protein is Succinate--CoA ligase [ADP-forming] subunit beta of Vibrio atlanticus (strain LGP32) (Vibrio splendidus (strain Mel32)).